A 238-amino-acid polypeptide reads, in one-letter code: Orotidine 5'-phosphate decarboxylase (238 aa).

Substrate contacts are provided by residues D10, K32, D59–T68, T122, R184, Q193, G213, and R214. Catalysis depends on K61, which acts as the Proton donor.

The protein belongs to the OMP decarboxylase family. Type 1 subfamily. In terms of assembly, homodimer.

The enzyme catalyses orotidine 5'-phosphate + H(+) = UMP + CO2. It functions in the pathway pyrimidine metabolism; UMP biosynthesis via de novo pathway; UMP from orotate: step 2/2. Catalyzes the decarboxylation of orotidine 5'-monophosphate (OMP) to uridine 5'-monophosphate (UMP). The protein is Orotidine 5'-phosphate decarboxylase of Bacillus cereus (strain B4264).